The sequence spans 212 residues: Kynurenine formamidase (212 aa).

Tryptophan 18 contacts substrate. Zn(2+) contacts are provided by histidine 48, histidine 52, and aspartate 54. The Proton donor/acceptor role is filled by histidine 58. Residues histidine 160 and glutamate 172 each contribute to the Zn(2+) site.

Belongs to the Cyclase 1 superfamily. KynB family. Homodimer. Zn(2+) serves as cofactor.

It catalyses the reaction N-formyl-L-kynurenine + H2O = L-kynurenine + formate + H(+). It participates in amino-acid degradation; L-tryptophan degradation via kynurenine pathway; L-kynurenine from L-tryptophan: step 2/2. Its function is as follows. Catalyzes the hydrolysis of N-formyl-L-kynurenine to L-kynurenine, the second step in the kynurenine pathway of tryptophan degradation. This chain is Kynurenine formamidase, found in Paraburkholderia phytofirmans (strain DSM 17436 / LMG 22146 / PsJN) (Burkholderia phytofirmans).